Consider the following 592-residue polypeptide: MAATDFFFAFVFSFALIFGFSFAGDPYVSYDFTLSYITASPLGVPQQVIAVNGKFPGPVINATTNYNVHVNVLNHLDEPLLLTWPGVQMRRNSWQDGVLGTNCPIPPNWNFTYDFQLKDQIGSYFYSPSLNFQRASGGFGALIINNRDLVPIPFTEPDGEIIFIIGDWYTQNHTALRRILDSGKELGMPDGVLINGKGPFKYNSSVPDGIEHETVNVDPGKTYRIRVHNVGISTSLNFRIQNHKLLLIETEGRYTSQMNFTDFDVHVGQSYSFLVTMDQNATSDYYIVASARFVNETVWQRVTGVGILHYSNSKGPASGPLPVSATDVNHPWSAMNQPRAIKQNTSASGARPNPQGSFHYGQINITRTYILRSLPPTKINGKLRATLNGISFVNPSTPMRLADDHKVKGDYMLDFPDRPLDEKLPRLSSSIINATYKGFIQVIFQNNDTKIQSFHIDGYAFYVVAMDFGIWSEDRNSSYNNWDAVARSTVEVYPGAWTAVLISLDNVGVWNIRVENLDRWYLGQETYMRIINPEENGSTEMDPPENVMYCGALQAMQKEQHHSSATKSMTNGQLILIFSMMMVLLSSFSSFC.

The N-terminal stretch at 1-23 is a signal peptide; it reads MAATDFFFAFVFSFALIFGFSFA. N-linked (GlcNAc...) asparagine glycosylation is found at N61, N110, N172, N203, N259, N280, N295, N344, N364, N433, and N447. H455 is a binding site for Cu cation. N-linked (GlcNAc...) asparagine glycans are attached at residues N476 and N536. A lipid anchor (GPI-anchor amidated serine) is attached at S564. The propeptide at 565–592 is removed in mature form; the sequence is ATKSMTNGQLILIFSMMMVLLSSFSSFC.

Belongs to the multicopper oxidase family. The cofactor is Cu cation.

It is found in the cell membrane. The protein is Monocopper oxidase-like protein SKS2 (SKS2) of Arabidopsis thaliana (Mouse-ear cress).